A 180-amino-acid polypeptide reads, in one-letter code: Ribosome-recycling factor (180 aa).

The tract at residues 135–156 (SDLKKDNDLSEDSRHRTEDDIQ) is disordered.

It belongs to the RRF family.

Its subcellular location is the cytoplasm. In terms of biological role, responsible for the release of ribosomes from messenger RNA at the termination of protein biosynthesis. May increase the efficiency of translation by recycling ribosomes from one round of translation to another. This Oenococcus oeni (strain ATCC BAA-331 / PSU-1) protein is Ribosome-recycling factor.